A 354-amino-acid polypeptide reads, in one-letter code: UDP-N-acetylglucosamine--N-acetylmuramyl-(pentapeptide) pyrophosphoryl-undecaprenol N-acetylglucosamine transferase (354 aa).

Residues Ser-13 to Gly-15, Asn-125, Arg-161, Ser-189, Ile-242, Ala-261 to Glu-266, and Gln-286 contribute to the UDP-N-acetyl-alpha-D-glucosamine site.

This sequence belongs to the glycosyltransferase 28 family. MurG subfamily.

The protein resides in the cell inner membrane. The enzyme catalyses di-trans,octa-cis-undecaprenyl diphospho-N-acetyl-alpha-D-muramoyl-L-alanyl-D-glutamyl-meso-2,6-diaminopimeloyl-D-alanyl-D-alanine + UDP-N-acetyl-alpha-D-glucosamine = di-trans,octa-cis-undecaprenyl diphospho-[N-acetyl-alpha-D-glucosaminyl-(1-&gt;4)]-N-acetyl-alpha-D-muramoyl-L-alanyl-D-glutamyl-meso-2,6-diaminopimeloyl-D-alanyl-D-alanine + UDP + H(+). Its pathway is cell wall biogenesis; peptidoglycan biosynthesis. In terms of biological role, cell wall formation. Catalyzes the transfer of a GlcNAc subunit on undecaprenyl-pyrophosphoryl-MurNAc-pentapeptide (lipid intermediate I) to form undecaprenyl-pyrophosphoryl-MurNAc-(pentapeptide)GlcNAc (lipid intermediate II). This chain is UDP-N-acetylglucosamine--N-acetylmuramyl-(pentapeptide) pyrophosphoryl-undecaprenol N-acetylglucosamine transferase, found in Buchnera aphidicola subsp. Schizaphis graminum (strain Sg).